The following is a 428-amino-acid chain: Kynureninase (428 aa).

Residues threonine 104, threonine 105, 132–135 (FPSD), aspartate 213, histidine 216, and tyrosine 238 contribute to the pyridoxal 5'-phosphate site. An N6-(pyridoxal phosphate)lysine modification is found at lysine 239. Pyridoxal 5'-phosphate-binding residues include tryptophan 267 and threonine 295.

The protein belongs to the kynureninase family. In terms of assembly, homodimer. Requires pyridoxal 5'-phosphate as cofactor.

The catalysed reaction is L-kynurenine + H2O = anthranilate + L-alanine + H(+). It catalyses the reaction 3-hydroxy-L-kynurenine + H2O = 3-hydroxyanthranilate + L-alanine + H(+). Its pathway is amino-acid degradation; L-kynurenine degradation; L-alanine and anthranilate from L-kynurenine: step 1/1. It functions in the pathway cofactor biosynthesis; NAD(+) biosynthesis; quinolinate from L-kynurenine: step 2/3. In terms of biological role, catalyzes the cleavage of L-kynurenine (L-Kyn) and L-3-hydroxykynurenine (L-3OHKyn) into anthranilic acid (AA) and 3-hydroxyanthranilic acid (3-OHAA), respectively. This Bacillus mycoides (strain KBAB4) (Bacillus weihenstephanensis) protein is Kynureninase.